A 103-amino-acid polypeptide reads, in one-letter code: Large ribosomal subunit protein bL21 (103 aa).

This sequence belongs to the bacterial ribosomal protein bL21 family. In terms of assembly, part of the 50S ribosomal subunit. Contacts protein L20.

This protein binds to 23S rRNA in the presence of protein L20. The protein is Large ribosomal subunit protein bL21 of Vibrio cholerae serotype O1 (strain ATCC 39541 / Classical Ogawa 395 / O395).